A 312-amino-acid polypeptide reads, in one-letter code: uncharacterized protein (312 aa).

2 helical membrane passes run 4 to 24 (AIYL…TYAE) and 286 to 306 (YLLS…AIYL).

The protein localises to the cell membrane. This is an uncharacterized protein from Methanocaldococcus jannaschii (strain ATCC 43067 / DSM 2661 / JAL-1 / JCM 10045 / NBRC 100440) (Methanococcus jannaschii).